Consider the following 422-residue polypeptide: UDP-N-acetylglucosamine 1-carboxyvinyltransferase (422 aa).

Phosphoenolpyruvate is bound at residue 22-23; it reads KN. Position 92 (Arg92) interacts with UDP-N-acetyl-alpha-D-glucosamine. Cys116 (proton donor) is an active-site residue. Cys116 carries the 2-(S-cysteinyl)pyruvic acid O-phosphothioketal modification. Residues 121–125, Asp305, and Ile327 each bind UDP-N-acetyl-alpha-D-glucosamine; that span reads RPVDQ.

This sequence belongs to the EPSP synthase family. MurA subfamily.

Its subcellular location is the cytoplasm. It catalyses the reaction phosphoenolpyruvate + UDP-N-acetyl-alpha-D-glucosamine = UDP-N-acetyl-3-O-(1-carboxyvinyl)-alpha-D-glucosamine + phosphate. The protein operates within cell wall biogenesis; peptidoglycan biosynthesis. Its function is as follows. Cell wall formation. Adds enolpyruvyl to UDP-N-acetylglucosamine. The sequence is that of UDP-N-acetylglucosamine 1-carboxyvinyltransferase from Sorangium cellulosum (strain So ce56) (Polyangium cellulosum (strain So ce56)).